A 268-amino-acid chain; its full sequence is Xyloglucan endotransglucosylase protein 7 (268 aa).

The GH16 domain occupies 1 to 196 (MNAEGGNLHR…WTKAPFTASY (196 aa)). E82 acts as the Nucleophile in catalysis. E86 acts as the Proton donor in catalysis. Position 86 (E86) interacts with xyloglucan. N90 carries N-linked (GlcNAc...) asparagine glycosylation. Residues 99 to 101 (HTN), 109 to 111 (NRE), 175 to 176 (DW), and G180 contribute to the xyloglucan site. 2 disulfide bridges follow: C204-C213 and C251-C265. R256 provides a ligand contact to xyloglucan.

This sequence belongs to the glycosyl hydrolase 16 family. XTH group 2 subfamily. In terms of processing, contains at least one intrachain disulfide bond essential for its enzymatic activity. As to expression, expressed at a very high level in flowers and stems (picked at anthesis), and at a lower level in ripe leaves and fruits.

The protein resides in the cytoplasm. It carries out the reaction breaks a beta-(1-&gt;4) bond in the backbone of a xyloglucan and transfers the xyloglucanyl segment on to O-4 of the non-reducing terminal glucose residue of an acceptor, which can be a xyloglucan or an oligosaccharide of xyloglucan.. Catalyzes xyloglucan endotransglycosylation (XET). Cleaves and religates xyloglucan polymers. Does not catalyze xyloglucan endohydrolysis (XEH). Probably involved in cell wall assembly and synthesis in fast growing tissues and in the maintenance of firmness in mature fruits. In Diospyros kaki (Kaki persimmon), this protein is Xyloglucan endotransglucosylase protein 7.